Reading from the N-terminus, the 390-residue chain is S-adenosylmethionine synthase (390 aa).

Histidine 15 lines the ATP pocket. Position 17 (aspartate 17) interacts with Mg(2+). Glutamate 43 is a binding site for K(+). The L-methionine site is built by glutamate 56 and glutamine 99. Residues glutamine 99–arginine 109 form a flexible loop region. ATP is bound by residues aspartate 164–lysine 166, arginine 230–phenylalanine 231, aspartate 239, arginine 245–lysine 246, alanine 262, and lysine 266. Aspartate 239 provides a ligand contact to L-methionine. Residue lysine 270 participates in L-methionine binding.

The protein belongs to the AdoMet synthase family. In terms of assembly, homotetramer; dimer of dimers. Mg(2+) serves as cofactor. K(+) is required as a cofactor.

Its subcellular location is the cytoplasm. The catalysed reaction is L-methionine + ATP + H2O = S-adenosyl-L-methionine + phosphate + diphosphate. It functions in the pathway amino-acid biosynthesis; S-adenosyl-L-methionine biosynthesis; S-adenosyl-L-methionine from L-methionine: step 1/1. Its function is as follows. Catalyzes the formation of S-adenosylmethionine (AdoMet) from methionine and ATP. The overall synthetic reaction is composed of two sequential steps, AdoMet formation and the subsequent tripolyphosphate hydrolysis which occurs prior to release of AdoMet from the enzyme. This Photorhabdus laumondii subsp. laumondii (strain DSM 15139 / CIP 105565 / TT01) (Photorhabdus luminescens subsp. laumondii) protein is S-adenosylmethionine synthase.